We begin with the raw amino-acid sequence, 447 residues long: uncharacterized protein (447 aa).

4 residues coordinate [4Fe-4S] cluster: C87, C93, C96, and C162. Residues Q284, Y313, E334, and D375 each contribute to the S-adenosyl-L-methionine site. The active-site Nucleophile is C402.

Belongs to the class I-like SAM-binding methyltransferase superfamily. RNA M5U methyltransferase family.

This is an uncharacterized protein from Nanoarchaeum equitans (strain Kin4-M).